A 145-amino-acid chain; its full sequence is Meiotically up-regulated gene 124 protein (145 aa).

2 helical membrane-spanning segments follow: residues 18–38 and 95–115; these read IILT…CPSI and FAWS…NFFL.

It localises to the membrane. Functionally, has a role in meiosis. The polypeptide is Meiotically up-regulated gene 124 protein (mug124) (Schizosaccharomyces pombe (strain 972 / ATCC 24843) (Fission yeast)).